A 247-amino-acid polypeptide reads, in one-letter code: Inhibitory synaptic factor 1 (247 aa).

Residues 30–65 (RAVIGQLEGILRDLKEVAKELKEVVEQIDRLTSDFE) are a coiled coil. Disordered regions lie at residues 69 to 90 (DTDDWTPGTVSSTSSSEKGGPL), 112 to 166 (ASTP…RDRV), and 180 to 217 (DDSEDPPYGQETPRDPPRATAPCAVMKSKPGGLTGVRK). Over residues 76–85 (GTVSSTSSSE) the composition is skewed to polar residues.

It belongs to the INSYN1 family.

Its subcellular location is the postsynaptic density. Its function is as follows. May be a component of the protein machinery at the inhibitory synapses, probably acting as a scaffold. The sequence is that of Inhibitory synaptic factor 1 from Xenopus laevis (African clawed frog).